The sequence spans 210 residues: Large ribosomal subunit protein uL5 (210 aa).

Residues 188–210 are disordered; it reads AKDDPKKAKTKRGPAYYAKKKKK. Residues 195-210 are compositionally biased toward basic residues; that stretch reads AKTKRGPAYYAKKKKK.

The protein belongs to the universal ribosomal protein uL5 family. In terms of assembly, part of the 50S ribosomal subunit; part of the 5S rRNA/L5/L18/L25 subcomplex. Contacts the 5S rRNA and the P site tRNA. Forms a bridge to the 30S subunit in the 70S ribosome.

Functionally, this is one of the proteins that bind and probably mediate the attachment of the 5S RNA into the large ribosomal subunit, where it forms part of the central protuberance. In the 70S ribosome it contacts protein S13 of the 30S subunit (bridge B1b), connecting the 2 subunits; this bridge is implicated in subunit movement. Contacts the P site tRNA; the 5S rRNA and some of its associated proteins might help stabilize positioning of ribosome-bound tRNAs. The sequence is that of Large ribosomal subunit protein uL5 from Cutibacterium acnes (strain DSM 16379 / KPA171202) (Propionibacterium acnes).